A 68-amino-acid chain; its full sequence is Large ribosomal subunit protein uL30 (68 aa).

It belongs to the universal ribosomal protein uL30 family. Part of the 50S ribosomal subunit.

This chain is Large ribosomal subunit protein uL30, found in Bartonella tribocorum (strain CIP 105476 / IBS 506).